The following is a 186-amino-acid chain: ATP synthase subunit delta (186 aa).

This sequence belongs to the ATPase delta chain family. F-type ATPases have 2 components, F(1) - the catalytic core - and F(0) - the membrane proton channel. F(1) has five subunits: alpha(3), beta(3), gamma(1), delta(1), epsilon(1). F(0) has three main subunits: a(1), b(2) and c(10-14). The alpha and beta chains form an alternating ring which encloses part of the gamma chain. F(1) is attached to F(0) by a central stalk formed by the gamma and epsilon chains, while a peripheral stalk is formed by the delta and b chains.

It localises to the cell inner membrane. In terms of biological role, f(1)F(0) ATP synthase produces ATP from ADP in the presence of a proton or sodium gradient. F-type ATPases consist of two structural domains, F(1) containing the extramembraneous catalytic core and F(0) containing the membrane proton channel, linked together by a central stalk and a peripheral stalk. During catalysis, ATP synthesis in the catalytic domain of F(1) is coupled via a rotary mechanism of the central stalk subunits to proton translocation. This protein is part of the stalk that links CF(0) to CF(1). It either transmits conformational changes from CF(0) to CF(1) or is implicated in proton conduction. The chain is ATP synthase subunit delta from Brucella melitensis biotype 2 (strain ATCC 23457).